A 479-amino-acid polypeptide reads, in one-letter code: Poly(A) polymerase catalytic subunit (479 aa).

Residues Asp-202 and Asp-204 contribute to the active site. Ca(2+) is bound by residues Asp-202, Asp-204, and Asp-253.

Belongs to the poxviridae poly(A) polymerase catalytic subunit family. As to quaternary structure, heterodimer of a large (catalytic) subunit and a small (regulatory) subunit.

The enzyme catalyses RNA(n) + ATP = RNA(n)-3'-adenine ribonucleotide + diphosphate. Functionally, polymerase that creates the 3'-poly(A) tail of mRNA's. The protein is Poly(A) polymerase catalytic subunit (OPG063) of Bos taurus (Bovine).